The primary structure comprises 130 residues: Small ribosomal subunit protein uS11 (130 aa).

The protein belongs to the universal ribosomal protein uS11 family. In terms of assembly, part of the 30S ribosomal subunit. Interacts with proteins S7 and S18. Binds to IF-3.

Located on the platform of the 30S subunit, it bridges several disparate RNA helices of the 16S rRNA. Forms part of the Shine-Dalgarno cleft in the 70S ribosome. In Campylobacter fetus subsp. fetus (strain 82-40), this protein is Small ribosomal subunit protein uS11.